A 54-amino-acid chain; its full sequence is Ovomucoid (54 aa).

The Kazal-like domain maps to 4-54 (VDCSEYPKPVCSLEYMPLCGSDSQTYSNECNFCNAVVDSNGTLTLSHFGKC). Disulfide bonds link C6-C36, C14-C33, and C22-C54. N43 is a glycosylation site (N-linked (GlcNAc...) asparagine).

Its subcellular location is the secreted. The sequence is that of Ovomucoid from Caracara plancus (Southern caracara).